A 200-amino-acid chain; its full sequence is COMM domain-containing protein 7 (200 aa).

Positions 133-200 constitute a COMM domain; the sequence is QLIDMEWRFG…RVRASMECLS (68 aa).

This sequence belongs to the COMM domain-containing protein 7 family. In terms of assembly, component of the commander complex consisting of the CCC subcomplex and the retriever subcomplex. Component of the CCC (COMMD/CCDC22/CCDC93) subcomplex consisting of COMMD1, COMMD2, COMMD3, COMMD4, COMMD5, COMMD6, COMMD7, COMMD8, COMMD9, COMMD10, CCDC22 and CCDC93; within the complex forms a heterodimer with COMMD9. Interacts with RELA. Interacts with CCDC22, CCDC93, SCNN1B, CUL7.

It localises to the cytoplasmic vesicle. Scaffold protein in the commander complex that is essential for endosomal recycling of transmembrane cargos; the commander complex is composed of the CCC subcomplex and the retriever subcomplex. May modulate activity of cullin-RING E3 ubiquitin ligase (CRL) complexes. Associates with the NF-kappa-B complex and suppresses its transcriptional activity. The protein is COMM domain-containing protein 7 (Commd7) of Mus musculus (Mouse).